We begin with the raw amino-acid sequence, 197 residues long: ATP-dependent Clp protease proteolytic subunit (197 aa).

The active-site Nucleophile is S98. H123 is an active-site residue.

Belongs to the peptidase S14 family. As to quaternary structure, fourteen ClpP subunits assemble into 2 heptameric rings which stack back to back to give a disk-like structure with a central cavity, resembling the structure of eukaryotic proteasomes.

Its subcellular location is the cytoplasm. It carries out the reaction Hydrolysis of proteins to small peptides in the presence of ATP and magnesium. alpha-casein is the usual test substrate. In the absence of ATP, only oligopeptides shorter than five residues are hydrolyzed (such as succinyl-Leu-Tyr-|-NHMec, and Leu-Tyr-Leu-|-Tyr-Trp, in which cleavage of the -Tyr-|-Leu- and -Tyr-|-Trp bonds also occurs).. Functionally, cleaves peptides in various proteins in a process that requires ATP hydrolysis. Has a chymotrypsin-like activity. Plays a major role in the degradation of misfolded proteins. This is ATP-dependent Clp protease proteolytic subunit from Haemophilus ducreyi (strain 35000HP / ATCC 700724).